The sequence spans 486 residues: Endoglucanase 16 (486 aa).

The signal sequence occupies residues 1–30 (MANYKGRGNVMIRSMLLGLYGIINIVCVNG). Residue N29 is glycosylated (N-linked (GlcNAc...) asparagine). D87 serves as the catalytic Nucleophile. Active-site residues include H407, D458, and E467.

The protein belongs to the glycosyl hydrolase 9 (cellulase E) family.

It localises to the secreted. The enzyme catalyses Endohydrolysis of (1-&gt;4)-beta-D-glucosidic linkages in cellulose, lichenin and cereal beta-D-glucans.. In Arabidopsis thaliana (Mouse-ear cress), this protein is Endoglucanase 16.